The primary structure comprises 556 residues: Endonuclease/exonuclease/phosphatase family domain-containing protein 1 (556 aa).

Positions 39–68 (ERLNINTATEEELMTLPGVTRQVAQNIVEY) constitute a HhH domain.

The polypeptide is Endonuclease/exonuclease/phosphatase family domain-containing protein 1 (eepd1) (Xenopus laevis (African clawed frog)).